A 1556-amino-acid polypeptide reads, in one-letter code: Lysine-specific demethylase 5C (1556 aa).

Residues Cys14–Pro55 enclose the JmjN domain. In terms of domain architecture, ARID spans Thr79–Ser169. A compositionally biased stretch (polar residues) spans Leu197–Asn207. Residues Leu197–Ile227 form a disordered region. Glycyl lysine isopeptide (Lys-Gly) (interchain with G-Cter in SUMO2) cross-links involve residues Lys205, Lys229, Lys244, and Lys274. The tract at residues Leu257–Glu303 is disordered. Over residues Val273 to Val283 the composition is skewed to basic and acidic residues. At Ser287 the chain carries Phosphoserine. Residue Lys295 forms a Glycyl lysine isopeptide (Lys-Gly) (interchain with G-Cter in SUMO2) linkage. Residues Ser301 and Ser317 each carry the phosphoserine modification. A PHD-type 1 zinc finger spans residues Ser324–Ala374. Residues Glu468–Arg634 form the JmjC domain. 3 residues coordinate Fe cation: His514, Asp517, and His602. Ser893 and Ser897 each carry phosphoserine. Lys1127 is covalently cross-linked (Glycyl lysine isopeptide (Lys-Gly) (interchain with G-Cter in SUMO2)). The PHD-type 2 zinc-finger motif lies at Thr1185 to Ser1250. Disordered regions lie at residues Leu1315–Lys1362 and Glu1441–Leu1556. The segment covering Pro1335 to Pro1345 has biased composition (basic and acidic residues). Ser1359 carries the phosphoserine modification. Basic residues predominate over residues Ser1445–Val1460. Positions Asp1461–Arg1478 are enriched in basic and acidic residues. Over residues Glu1485–Gly1500 the composition is skewed to acidic residues. Polar residues-rich tracts occupy residues Ser1513–Gly1522 and Ser1530–Ser1540. Positions Pro1541–Leu1556 are enriched in low complexity.

The protein belongs to the JARID1 histone demethylase family. As to quaternary structure, part of two distinct complexes, one containing E2F6, and the other containing REST. Interacts with ZMYND8. Fe(2+) serves as cofactor.

It localises to the nucleus. It catalyses the reaction N(6),N(6),N(6)-trimethyl-L-lysyl(4)-[histone H3] + 3 2-oxoglutarate + 3 O2 = L-lysyl(4)-[histone H3] + 3 formaldehyde + 3 succinate + 3 CO2. In terms of biological role, histone demethylase that specifically demethylates 'Lys-4' of histone H3, thereby playing a central role in histone code. Does not demethylate histone H3 'Lys-9', H3 'Lys-27', H3 'Lys-36', H3 'Lys-79' or H4 'Lys-20'. Demethylates trimethylated and dimethylated but not monomethylated H3 'Lys-4'. Participates in transcriptional repression of neuronal genes by recruiting histone deacetylases and REST at neuron-restrictive silencer elements. Represses the CLOCK-BMAL1 heterodimer-mediated transcriptional activation of the core clock component PER2. This is Lysine-specific demethylase 5C (KDM5C) from Canis lupus familiaris (Dog).